The primary structure comprises 447 residues: NADP-specific glutamate dehydrogenase (447 aa).

Positions 92, 113, and 116 each coordinate substrate. Lys128 functions as the Proton donor in the catalytic mechanism. Gly167 is a binding site for substrate. NADP(+) is bound by residues Thr211 and Asn242. Ser380 lines the substrate pocket.

Belongs to the Glu/Leu/Phe/Val dehydrogenases family. As to quaternary structure, homohexamer.

The enzyme catalyses L-glutamate + NADP(+) + H2O = 2-oxoglutarate + NH4(+) + NADPH + H(+). Competitively inhibited by homoserine and by glutamine. Catalyzes the reversible oxidative deamination of glutamate to alpha-ketoglutarate and ammonia. This Escherichia coli (strain K12) protein is NADP-specific glutamate dehydrogenase.